We begin with the raw amino-acid sequence, 91 residues long: MKTLFFFLTIAVLVSSCTSNIMTKSILEGKTQFSIPSLSSTIDPAYEHIGHFPDDMKIIFCQQCAFHCIEKKKNIPHCENSICRCTLENIL.

Positions 1 to 19 (MKTLFFFLTIAVLVSSCTS) are cleaved as a signal peptide. 3 cysteine pairs are disulfide-bonded: Cys61/Cys78, Cys64/Cys83, and Cys68/Cys85.

The protein belongs to the DEFL family.

Its subcellular location is the secreted. This chain is Putative defensin-like protein 221, found in Arabidopsis thaliana (Mouse-ear cress).